The chain runs to 315 residues: Salivary protein SG34 (315 aa).

The first 20 residues, 1–20 (MPVSYDFVILLALFIVLARS), serve as a signal peptide directing secretion. A coiled-coil region spans residues 98–161 (NAEVELLRES…QEEIEQQTKQ (64 aa)).

(Microbial infection) Modulates replication of duck Tembusu virus in salivary glands and virus release into the saliva, probably via the regulation of antimicrobial peptides expression in response to duck Tembusu virus infection. This Aedes albopictus (Asian tiger mosquito) protein is Salivary protein SG34.